The primary structure comprises 286 residues: Polyamine aminopropyltransferase (286 aa).

Residues 1-235 (MSDYQETLYE…GAMTFAWGAT (235 aa)) enclose the PABS domain. Gln30 provides a ligand contact to S-methyl-5'-thioadenosine. 2 residues coordinate spermidine: His61 and Asp85. S-methyl-5'-thioadenosine is bound by residues Glu105 and 137–138 (DG). Catalysis depends on Asp155, which acts as the Proton acceptor. 155 to 158 (DSTD) contacts spermidine. Pro162 provides a ligand contact to S-methyl-5'-thioadenosine.

Belongs to the spermidine/spermine synthase family. In terms of assembly, homodimer or homotetramer.

Its subcellular location is the cytoplasm. It catalyses the reaction S-adenosyl 3-(methylsulfanyl)propylamine + putrescine = S-methyl-5'-thioadenosine + spermidine + H(+). The protein operates within amine and polyamine biosynthesis; spermidine biosynthesis; spermidine from putrescine: step 1/1. Catalyzes the irreversible transfer of a propylamine group from the amino donor S-adenosylmethioninamine (decarboxy-AdoMet) to putrescine (1,4-diaminobutane) to yield spermidine. This Pseudomonas syringae pv. tomato (strain ATCC BAA-871 / DC3000) protein is Polyamine aminopropyltransferase.